A 246-amino-acid chain; its full sequence is 14-3-3 protein beta/alpha (246 aa).

Met-1 is modified (N-acetylmethionine; in 14-3-3 protein beta/alpha; alternate). N-acetylmethionine is present on Met-1. N-acetylthreonine; in 14-3-3 protein beta/alpha, N-terminally processed is present on Thr-2. A Phosphothreonine modification is found at Thr-2. Lys-5 carries the post-translational modification N6-acetyllysine. Lys-51 is modified (N6-acetyllysine; alternate). Lys-51 is covalently cross-linked (Glycyl lysine isopeptide (Lys-Gly) (interchain with G-Cter in SUMO2); alternate). Ser-60 is modified (phosphoserine). At Lys-70 the chain carries N6-acetyllysine. A 3'-nitrotyrosine mark is found at Tyr-84 and Tyr-106. Lys-117 is modified (N6-acetyllysine). 2 positions are modified to phosphoserine: Ser-186 and Ser-232.

It belongs to the 14-3-3 family. In terms of assembly, homodimer. Interacts with SAMSN1 and PRKCE. Interacts with AKAP13. Interacts with SSH1 and TORC2/CRTC2. Interacts with ABL1; the interaction results in cytoplasmic location of ABL1 and inhibition of cABL-mediated apoptosis. Interacts with ROR2 (dimer); the interaction results in phosphorylation of YWHAB on tyrosine residues. Interacts with GAB2. Interacts with YAP1 (phosphorylated form). Interacts with the phosphorylated (by AKT1) form of SRPK2. Interacts with PKA-phosphorylated AANAT. Interacts with MYO1C. Interacts with SIRT2. Interacts with the 'Thr-369' phosphorylated form of DAPK2. Interacts with PI4KB, TBC1D22A and TBC1D22B. Interacts with the 'Ser-1134' and 'Ser-1161' phosphorylated form of SOS1. Interacts (via phosphorylated form) with YWHAB; this interaction occurs in a protein kinase AKT1-dependent manner. Interacts with SLITRK1. Interacts with SYNPO2 (phosphorylated form); YWHAB competes with ACTN2 for interaction with SYNPO2. Interacts with RIPOR2 (via phosphorylated form) isoform 2; this interaction occurs in a chemokine-dependent manner and does not compete for binding of RIPOR2 with RHOA nor blocks inhibition of RIPOR2-mediated RHOA activity. Interacts with MARK2 and MARK3. Interacts with TESK1; the interaction is dependent on the phosphorylation of TESK1 'Ser-437' and inhibits TESK1 kinase activity. Interacts with MEFV. Interacts with HDAC4. Interacts with ADAM22 (via C-terminus). As to quaternary structure, (Microbial infection) Interacts with herpes simplex virus 1 protein UL46. (Microbial infection) Probably interacts with Chlamydia trachomatis protein IncG. The alpha, brain-specific form differs from the beta form in being phosphorylated. Phosphorylated on Ser-60 by protein kinase C delta type catalytic subunit in a sphingosine-dependent fashion.

It localises to the cytoplasm. Its subcellular location is the melanosome. The protein localises to the vacuole membrane. In terms of biological role, adapter protein implicated in the regulation of a large spectrum of both general and specialized signaling pathways. Binds to a large number of partners, usually by recognition of a phosphoserine or phosphothreonine motif. Binding generally results in the modulation of the activity of the binding partner. Negative regulator of osteogenesis. Blocks the nuclear translocation of the phosphorylated form (by AKT1) of SRPK2 and antagonizes its stimulatory effect on cyclin D1 expression resulting in blockage of neuronal apoptosis elicited by SRPK2. Negative regulator of signaling cascades that mediate activation of MAP kinases via AKAP13. The chain is 14-3-3 protein beta/alpha (YWHAB) from Homo sapiens (Human).